We begin with the raw amino-acid sequence, 376 residues long: Methionine import ATP-binding protein MetN 2 (376 aa).

The disordered stretch occupies residues 1 to 25; it reads MTATAQRQRPIDTTGAGQRAQQAEL. The region spanning 34-273 is the ABC transporter domain; that stretch reads VRFINLGKTY…PQHEVSKTLL (240 aa). Position 70–77 (70–77) interacts with ATP; sequence GRSGAGKS.

The protein belongs to the ABC transporter superfamily. Methionine importer (TC 3.A.1.24) family. As to quaternary structure, the complex is composed of two ATP-binding proteins (MetN), two transmembrane proteins (MetI) and a solute-binding protein (MetQ).

It localises to the cell inner membrane. The enzyme catalyses L-methionine(out) + ATP + H2O = L-methionine(in) + ADP + phosphate + H(+). The catalysed reaction is D-methionine(out) + ATP + H2O = D-methionine(in) + ADP + phosphate + H(+). Part of the ABC transporter complex MetNIQ involved in methionine import. Responsible for energy coupling to the transport system. In Pseudomonas syringae pv. syringae (strain B728a), this protein is Methionine import ATP-binding protein MetN 2.